A 145-amino-acid polypeptide reads, in one-letter code: Protein SprT-like (145 aa).

The SprT-like domain maps to 4-140 (TNYVQEVSLA…VCGNCHGKLM (137 aa)). H64 provides a ligand contact to Zn(2+). E65 is a catalytic residue. H68 provides a ligand contact to Zn(2+).

This sequence belongs to the SprT family. It depends on Zn(2+) as a cofactor.

The protein resides in the cytoplasm. In Streptococcus pyogenes serotype M1, this protein is Protein SprT-like.